The chain runs to 239 residues: Cysteine-rich venom protein natrin-1 (239 aa).

The N-terminal stretch at 1–18 (MIAFSLLCFAAVLQQSFG) is a signal peptide. The 129-residue stretch at 37–165 (VDLHNSLRRR…AWSYFYVCQY (129 aa)) folds into the SCP domain. Intrachain disulfides connect Cys74–Cys152, Cys91–Cys166, Cys147–Cys163, Cys185–Cys192, Cys188–Cys197, Cys201–Cys234, Cys210–Cys228, and Cys219–Cys232. Residues 201–234 (CTIYNKLTNCDSLLKQSSCQDDWIKSNCPASCFC) form the ShKT domain.

In terms of tissue distribution, expressed by the venom gland.

The protein resides in the secreted. Inhibits calcium-activated potassium channels (KCa1.1/KCNMA1), voltage-gated potassium channel Kv1.3/KCNA3, and the calcium release channel/ryanodine receptor (RyR). Binds specifically to type 1 RyR (RyR1) from skeletal muscle. Inhibit both the binding of ryanodine to RyR1, and RyR1's calcium-channel activity. Inhibits carbachol-induced muscle contraction and weakly blocks muscle contraction evoked by potassium. The protein is Cysteine-rich venom protein natrin-1 of Naja atra (Chinese cobra).